Here is a 214-residue protein sequence, read N- to C-terminus: ATP-dependent Clp protease proteolytic subunit (214 aa).

Serine 113 functions as the Nucleophile in the catalytic mechanism. Histidine 138 is an active-site residue.

The protein belongs to the peptidase S14 family. In terms of assembly, fourteen ClpP subunits assemble into 2 heptameric rings which stack back to back to give a disk-like structure with a central cavity, resembling the structure of eukaryotic proteasomes.

The protein resides in the cytoplasm. The catalysed reaction is Hydrolysis of proteins to small peptides in the presence of ATP and magnesium. alpha-casein is the usual test substrate. In the absence of ATP, only oligopeptides shorter than five residues are hydrolyzed (such as succinyl-Leu-Tyr-|-NHMec, and Leu-Tyr-Leu-|-Tyr-Trp, in which cleavage of the -Tyr-|-Leu- and -Tyr-|-Trp bonds also occurs).. In terms of biological role, cleaves peptides in various proteins in a process that requires ATP hydrolysis. Has a chymotrypsin-like activity. Plays a major role in the degradation of misfolded proteins. The protein is ATP-dependent Clp protease proteolytic subunit of Alkalilimnicola ehrlichii (strain ATCC BAA-1101 / DSM 17681 / MLHE-1).